Here is a 351-residue protein sequence, read N- to C-terminus: Anthranilate phosphoribosyltransferase (351 aa).

Residues Gly-80, 83–84 (GD), Thr-88, 90–93 (NIST), 108–116 (KHGNRSVTS), and Ser-120 each bind 5-phospho-alpha-D-ribose 1-diphosphate. Position 80 (Gly-80) interacts with anthranilate. Residue Ser-92 participates in Mg(2+) binding. Asn-111 contributes to the anthranilate binding site. Arg-166 contacts anthranilate. Asp-229 and Glu-230 together coordinate Mg(2+).

The protein belongs to the anthranilate phosphoribosyltransferase family. As to quaternary structure, homodimer. Mg(2+) is required as a cofactor.

The catalysed reaction is N-(5-phospho-beta-D-ribosyl)anthranilate + diphosphate = 5-phospho-alpha-D-ribose 1-diphosphate + anthranilate. The protein operates within amino-acid biosynthesis; L-tryptophan biosynthesis; L-tryptophan from chorismate: step 2/5. Functionally, catalyzes the transfer of the phosphoribosyl group of 5-phosphorylribose-1-pyrophosphate (PRPP) to anthranilate to yield N-(5'-phosphoribosyl)-anthranilate (PRA). In Pelodictyon phaeoclathratiforme (strain DSM 5477 / BU-1), this protein is Anthranilate phosphoribosyltransferase.